The chain runs to 119 residues: Fluoride-specific ion channel FluC (119 aa).

The next 4 membrane-spanning stretches (helical) occupy residues 5-25 (IIPL…LNLA), 30-50 (IPPA…IGIF), 59-79 (WKLL…GFSL), and 97-117 (IFLH…IGAA). The Na(+) site is built by glycine 69 and threonine 72.

Belongs to the fluoride channel Fluc/FEX (TC 1.A.43) family.

Its subcellular location is the cell inner membrane. It catalyses the reaction fluoride(in) = fluoride(out). Its activity is regulated as follows. Na(+) is not transported, but it plays an essential structural role and its presence is essential for fluoride channel function. Functionally, fluoride-specific ion channel. Important for reducing fluoride concentration in the cell, thus reducing its toxicity. This is Fluoride-specific ion channel FluC from Neisseria meningitidis serogroup B (strain ATCC BAA-335 / MC58).